We begin with the raw amino-acid sequence, 317 residues long: Fe-S cluster assembly protein dre2 (317 aa).

Positions 22 to 152 are N-terminal SAM-like domain; sequence PVQAKRTLLL…KPNFEPSAAV (131 aa). Residues 153 to 209 form a linker region; that stretch reads PLKFGLKKKNKPTPTAVPSIPTGFAAPMGIDSPVTNHDRDEDDELINEDTLLSEEDL. Positions 219, 230, 233, and 235 each coordinate [2Fe-2S] cluster. Positions 219–235 are fe-S binding site A; that stretch reads CQPKTGRRRRACKDCTC. C280, C283, C291, and C294 together coordinate [4Fe-4S] cluster. 2 consecutive short sequence motifs (cx2C motif) follow at residues 280–283 and 291–294; these read CGSC and CDGC. Residues 280–294 are fe-S binding site B; the sequence is CGSCALGDAFRCDGC.

It belongs to the anamorsin family. As to quaternary structure, monomer. Interacts with tah18. Interacts with mia40. [2Fe-2S] cluster serves as cofactor. The cofactor is [4Fe-4S] cluster.

The protein localises to the cytoplasm. It is found in the mitochondrion intermembrane space. Its function is as follows. Component of the cytosolic iron-sulfur (Fe-S) protein assembly (CIA) machinery required for the maturation of extramitochondrial Fe-S proteins. Part of an electron transfer chain functioning in an early step of cytosolic Fe-S biogenesis, facilitating the de novo assembly of a [4Fe-4S] cluster on the scaffold complex cfd1-nbp35. Electrons are transferred to dre2 from NADPH via the FAD- and FMN-containing protein tah18. Tah18-dre2 are also required for the assembly of the diferric tyrosyl radical cofactor of ribonucleotide reductase (RNR), probably by providing electrons for reduction during radical cofactor maturation in the catalytic small subunit rnr2. The chain is Fe-S cluster assembly protein dre2 from Penicillium rubens (strain ATCC 28089 / DSM 1075 / NRRL 1951 / Wisconsin 54-1255) (Penicillium chrysogenum).